Here is a 54-residue protein sequence, read N- to C-terminus: Preprotein translocase subunit SecG (54 aa).

At 1-31 (MSSGSNSGGLMSSAGLVRYFDSEDRDAIAID) the chain is on the cytoplasmic side. The chain crosses the membrane as a helical span at residues 32–53 (PKTVLAFCVLFGVFVQILSLTV). Residue alanine 54 is a topological domain, extracellular.

This sequence belongs to the SEC61-beta family. Component of the protein translocase complex. Heterotrimer consisting of alpha (SecY), beta (SecG) and gamma (SecE) subunits. Can form oligomers of the heterotrimer.

It is found in the cell membrane. In terms of biological role, involved in protein export. The function of the beta subunit is unknown, but it may be involved in stabilization of the trimeric complex. The protein is Preprotein translocase subunit SecG of Halorubrum lacusprofundi (strain ATCC 49239 / DSM 5036 / JCM 8891 / ACAM 34).